Here is a 533-residue protein sequence, read N- to C-terminus: Beta-1,4 N-acetylgalactosaminyltransferase 1 (533 aa).

Residues 1–7 (MRLDRRA) are Cytoplasmic-facing. The chain crosses the membrane as a helical; Signal-anchor for type II membrane protein span at residues 8–25 (LYALVLLLACASLGLLYA). Topologically, residues 26–533 (STRDAPGLPN…KHRLQCMTAE (508 aa)) are lumenal. Asn-79 and Asn-274 each carry an N-linked (GlcNAc...) asparagine glycan. Cys-429 and Cys-476 are disulfide-bonded.

The protein belongs to the glycosyltransferase 2 family. As to quaternary structure, homodimer; disulfide-linked. As to expression, strongly expressed in brain, testis, spleen, and to a lesser extent in liver.

It localises to the golgi apparatus membrane. It catalyses the reaction a ganglioside GM3 (d18:1(4E)) + UDP-N-acetyl-alpha-D-galactosamine = a ganglioside GM2 (d18:1(4E)) + UDP + H(+). The enzyme catalyses a ganglioside GD3 (d18:1(4E)) + UDP-N-acetyl-alpha-D-galactosamine = a ganglioside GD2 (d18:1(4E)) + UDP + H(+). It carries out the reaction a ganglioside GM3 + UDP-N-acetyl-alpha-D-galactosamine = a ganglioside GM2 + UDP + H(+). The catalysed reaction is a ganglioside GD3 + UDP-N-acetyl-alpha-D-galactosamine = a ganglioside GD2 + UDP + H(+). It catalyses the reaction a ganglioside GD1a + UDP-N-acetyl-alpha-D-galactosamine = a ganglioside GalNAc-GD1a + UDP + H(+). The enzyme catalyses a ganglioside GT3 (d18:1(4E)) + UDP-N-acetyl-alpha-D-galactosamine = a ganglioside GT2 (d18:1(4E)) + UDP + H(+). It carries out the reaction a beta-D-Gal-(1-&gt;4)-beta-D-Glc-(1&lt;-&gt;1)-Cer(d18:1(4E)) + UDP-N-acetyl-alpha-D-galactosamine = a ganglioside GA2 (d18:1(4E)) + UDP + H(+). The catalysed reaction is a neolactoside IV(3)-alpha-NeuGc-nLc4Cer + UDP-N-acetyl-alpha-D-galactosamine = a neolactoside IV(4)-beta-GalNAc-IV(3)-alpha-NeuGc-nLc4Cer + UDP + H(+). The protein operates within sphingolipid metabolism. Its function is as follows. Involved in the biosynthesis of gangliosides GM2, GD2, GT2 and GA2 from GM3, GD3, GT3 and GA3, respectively. The polypeptide is Beta-1,4 N-acetylgalactosaminyltransferase 1 (Rattus norvegicus (Rat)).